The sequence spans 391 residues: Stearoyl-[acyl-carrier-protein] 9-desaturase 5, chloroplastic (391 aa).

A disordered region spans residues 1-20; sequence MAFAPSHTASPSYCGVAQGG. The N-terminal 32 residues, 1–32, are a transit peptide targeting the chloroplast; that stretch reads MAFAPSHTASPSYCGVAQGGRRSNGMSPVVAM. Fe cation contacts are provided by Glu133, Glu171, His174, Glu224, Glu257, and His260.

Belongs to the fatty acid desaturase type 2 family. Homodimer. It depends on Fe(2+) as a cofactor.

The protein resides in the plastid. Its subcellular location is the chloroplast. The enzyme catalyses octadecanoyl-[ACP] + 2 reduced [2Fe-2S]-[ferredoxin] + O2 + 2 H(+) = (9Z)-octadecenoyl-[ACP] + 2 oxidized [2Fe-2S]-[ferredoxin] + 2 H2O. Its pathway is lipid metabolism; fatty acid metabolism. Its function is as follows. Converts stearoyl-ACP to oleoyl-ACP by introduction of a cis double bond between carbons 9 and 10 of the acyl chain. The protein is Stearoyl-[acyl-carrier-protein] 9-desaturase 5, chloroplastic of Oryza sativa subsp. indica (Rice).